The following is a 109-amino-acid chain: Cell division suppressor protein YneA (109 aa).

The 55-residue stretch at 40-94 (STVTITKGDTLWELSNKYHNHHHLTTNEFVKWVEDVNDLNSDTAQSLSPGDKLYI) folds into the LysM domain.

The protein belongs to the YneA family.

Its subcellular location is the cytoplasm. Its function is as follows. Inhibits cell division during the SOS response. Affects a later stage of the cell division protein assembly, after the assembly of the Z ring, by probably suppressing recruitment of FtsL and/or DivIC to the division machinery. The polypeptide is Cell division suppressor protein YneA (Priestia megaterium (strain DSM 319 / IMG 1521) (Bacillus megaterium)).